The following is a 202-amino-acid chain: Small ribosomal subunit protein uS4c (202 aa).

The 64-residue stretch at Met-90–Ile-153 folds into the S4 RNA-binding domain.

The protein belongs to the universal ribosomal protein uS4 family. In terms of assembly, part of the 30S ribosomal subunit. Contacts protein S5. The interaction surface between S4 and S5 is involved in control of translational fidelity.

Its subcellular location is the plastid. The protein localises to the chloroplast. Functionally, one of the primary rRNA binding proteins, it binds directly to 16S rRNA where it nucleates assembly of the body of the 30S subunit. In terms of biological role, with S5 and S12 plays an important role in translational accuracy. The chain is Small ribosomal subunit protein uS4c (rps4) from Sphaerocarpos donnelli (Liverwort).